We begin with the raw amino-acid sequence, 286 residues long: Hydroxysteroid 11-beta-dehydrogenase 1-like protein (286 aa).

A signal peptide spans 1–17; that stretch reads MGIHIKRWCFIILVASA. Residues 39-65, 90-91, and 117-119 each bind NADP(+); these read GASTGIGEEIAYHYARAGAKLVLTARR, DM, and NHI. S168 serves as a coordination point for substrate. Y181 serves as the catalytic Proton acceptor. NADP(+)-binding positions include 181–185 and 214–220; these read YAASK and GLIDTQS.

This sequence belongs to the short-chain dehydrogenases/reductases (SDR) family.

It is found in the secreted. The enzyme catalyses cortisone + NADPH + H(+) = cortisol + NADP(+). Functionally, unidirectional NADP(+)-dependent cortisol dehydrogenase (in vitro). This chain is Hydroxysteroid 11-beta-dehydrogenase 1-like protein (hsd11b1l), found in Xenopus tropicalis (Western clawed frog).